The following is a 238-amino-acid chain: Ribitol-5-phosphate cytidylyltransferase 2 (238 aa).

CTP contacts are provided by residues 7–10 (LAGG) and 81–87 (GTDRNET).

The protein belongs to the IspD/TarI cytidylyltransferase family. TarI subfamily.

It carries out the reaction D-ribitol 5-phosphate + CTP + H(+) = CDP-L-ribitol + diphosphate. It functions in the pathway cell wall biogenesis; poly(ribitol phosphate) teichoic acid biosynthesis. Catalyzes the transfer of the cytidylyl group of CTP to D-ribitol 5-phosphate. This Staphylococcus aureus (strain bovine RF122 / ET3-1) protein is Ribitol-5-phosphate cytidylyltransferase 2.